The primary structure comprises 146 residues: D-aminoacyl-tRNA deacylase (146 aa).

A Gly-cisPro motif, important for rejection of L-amino acids motif is present at residues 137-138; the sequence is GP.

Belongs to the DTD family. Homodimer.

Its subcellular location is the cytoplasm. The enzyme catalyses glycyl-tRNA(Ala) + H2O = tRNA(Ala) + glycine + H(+). It catalyses the reaction a D-aminoacyl-tRNA + H2O = a tRNA + a D-alpha-amino acid + H(+). An aminoacyl-tRNA editing enzyme that deacylates mischarged D-aminoacyl-tRNAs. Also deacylates mischarged glycyl-tRNA(Ala), protecting cells against glycine mischarging by AlaRS. Acts via tRNA-based rather than protein-based catalysis; rejects L-amino acids rather than detecting D-amino acids in the active site. By recycling D-aminoacyl-tRNA to D-amino acids and free tRNA molecules, this enzyme counteracts the toxicity associated with the formation of D-aminoacyl-tRNA entities in vivo and helps enforce protein L-homochirality. The protein is D-aminoacyl-tRNA deacylase of Bacillus thuringiensis subsp. konkukian (strain 97-27).